Reading from the N-terminus, the 210-residue chain is Prolactin (210 aa).

A signal peptide spans 1–23; that stretch reads MARRSQGTKLHLAVLCLVVSCHA. 2 cysteine pairs are disulfide-bonded: cysteine 69–cysteine 183 and cysteine 200–cysteine 210.

It belongs to the somatotropin/prolactin family. As to expression, pituitary gland.

Its subcellular location is the secreted. The protein is Prolactin (prl) of Coregonus autumnalis (Arctic cisco).